We begin with the raw amino-acid sequence, 66 residues long: Type 3 secretion system chaperone YscE (66 aa).

This sequence belongs to the YscE family. Component of the heterodimeric YscE-YscG chaperone. The YscE-YscG chaperone forms a stable ternary complex with YscF/SctF. YscE interacts with YscG, but makes very little direct contact with YscF. Homodimer in solution.

The protein resides in the cytoplasm. Its function is as follows. Chaperone of the type III secretion system (T3SS), also called injectisome, which is used to inject bacterial effector proteins into eukaryotic host cells. Along with YscG, prevents premature polymerization of the YscF/SctF needle protein within the cytoplasm. Is also required for stable expression of cytosolic YscF and for YscF secretion. Likely plays a role in targeting YscF present in the cytosolic YscEFG complex to the T3SS apparatus. Required for Yop secretion. This chain is Type 3 secretion system chaperone YscE, found in Yersinia pestis.